The following is a 500-amino-acid chain: Glucokinase-1 (500 aa).

Ser2 carries the post-translational modification N-acetylserine. Ser2 is subject to Phosphoserine. Residues Arg12–Leu498 form the Hexokinase domain. Residues Asn74–Thr216 form a hexokinase small subdomain region. Lys110 contributes to the ATP binding site. Residues Lys158–Phe184 form a glucose-binding region. The tract at residues Asn217 to Asp487 is hexokinase large subdomain. Position 470 is a phosphoserine (Ser470). Asp487–Gly492 is a binding site for ATP.

This sequence belongs to the hexokinase family. In terms of assembly, monomer.

The catalysed reaction is D-glucose + ATP = D-glucose 6-phosphate + ADP + H(+). It functions in the pathway carbohydrate metabolism; hexose metabolism. It participates in carbohydrate degradation; glycolysis; D-glyceraldehyde 3-phosphate and glycerone phosphate from D-glucose: step 1/4. In terms of biological role, two isoenzymes, hexokinase-1 and hexokinase-2, can phosphorylate keto- and aldohexoses in yeast, whereas a third isoenzyme, GLK, is specific for aldohexoses. All glucose phosphorylating enzymes are involved in glucose uptake. This Saccharomyces cerevisiae (strain ATCC 204508 / S288c) (Baker's yeast) protein is Glucokinase-1 (GLK1).